Here is a 503-residue protein sequence, read N- to C-terminus: Activin receptor type-1-like (503 aa).

The N-terminal stretch at 1 to 21 (MTLGSPRKGLLMLLMALVTQG) is a signal peptide. Residues 22-118 (DPVKPSRGPL…PSEQPGTDGQ (97 aa)) lie on the Extracellular side of the membrane. 3 cysteine pairs are disulfide-bonded: cysteine 34–cysteine 51, cysteine 36–cysteine 41, and cysteine 46–cysteine 69. The mediates specificity for BMP ligand stretch occupies residues 73-76 (HREL). 2 cysteine pairs are disulfide-bonded: cysteine 77/cysteine 89 and cysteine 90/cysteine 95. Asparagine 98 carries N-linked (GlcNAc...) asparagine glycosylation. Residues 119–141 (LALILGPVLALLALVALGVLGLW) form a helical membrane-spanning segment. Topologically, residues 142–503 (HVRRRQEKQR…NSPEKPKVIQ (362 aa)) are cytoplasmic. Phosphoserine occurs at positions 155, 160, and 161. The GS domain maps to 172-201 (SMLGDLLDSDCTTGSGSGLPFLVQRTVARQ). The 291-residue stretch at 202–492 (VALVECVGKG…LRIKKTLQKI (291 aa)) folds into the Protein kinase domain. Residues 208–216 (VGKGRYGEV) and lysine 229 contribute to the ATP site. The active-site Proton acceptor is the aspartate 330.

It belongs to the protein kinase superfamily. TKL Ser/Thr protein kinase family. TGFB receptor subfamily. As to quaternary structure, interacts with TSC22D1/TSC-22. Mg(2+) is required as a cofactor. Mn(2+) serves as cofactor.

The protein resides in the cell membrane. It catalyses the reaction L-threonyl-[receptor-protein] + ATP = O-phospho-L-threonyl-[receptor-protein] + ADP + H(+). The enzyme catalyses L-seryl-[receptor-protein] + ATP = O-phospho-L-seryl-[receptor-protein] + ADP + H(+). Type I receptor for TGF-beta family ligands BMP9/GDF2 and BMP10 and important regulator of normal blood vessel development. On ligand binding, forms a receptor complex consisting of two type II and two type I transmembrane serine/threonine kinases. Type II receptors phosphorylate and activate type I receptors which autophosphorylate, then bind and activate SMAD transcriptional regulators. May bind activin as well. In Homo sapiens (Human), this protein is Activin receptor type-1-like (ACVRL1).